The sequence spans 174 residues: NADH-quinone oxidoreductase subunit I (174 aa).

2 4Fe-4S ferredoxin-type domains span residues leucine 61–alanine 91 and isoleucine 103–glutamate 132. [4Fe-4S] cluster-binding residues include cysteine 71, cysteine 74, cysteine 77, cysteine 81, cysteine 112, cysteine 115, cysteine 118, and cysteine 122.

The protein belongs to the complex I 23 kDa subunit family. As to quaternary structure, NDH-1 is composed of 14 different subunits. Subunits NuoA, H, J, K, L, M, N constitute the membrane sector of the complex. It depends on [4Fe-4S] cluster as a cofactor.

Its subcellular location is the cell inner membrane. It catalyses the reaction a quinone + NADH + 5 H(+)(in) = a quinol + NAD(+) + 4 H(+)(out). In terms of biological role, NDH-1 shuttles electrons from NADH, via FMN and iron-sulfur (Fe-S) centers, to quinones in the respiratory chain. The immediate electron acceptor for the enzyme in this species is believed to be ubiquinone. Couples the redox reaction to proton translocation (for every two electrons transferred, four hydrogen ions are translocated across the cytoplasmic membrane), and thus conserves the redox energy in a proton gradient. This Bdellovibrio bacteriovorus (strain ATCC 15356 / DSM 50701 / NCIMB 9529 / HD100) protein is NADH-quinone oxidoreductase subunit I.